Consider the following 249-residue polypeptide: uncharacterized protein (249 aa).

2 stretches are compositionally biased toward polar residues: residues 66–79 (NASLESGQSSTISP) and 92–119 (ASGSVSANKTFQSTESSALHQPKSSSSE). Residues 66-142 (NASLESGQSS…GPTSPRVTPG (77 aa)) are disordered.

It is found in the plastid. Its subcellular location is the chloroplast. This is an uncharacterized protein from Chlorella vulgaris (Green alga).